Reading from the N-terminus, the 617-residue chain is Vacuolar protein sorting-associated protein 33B (617 aa).

Alanine 2 carries the post-translational modification N-acetylalanine.

The protein belongs to the STXBP/unc-18/SEC1 family. Interacts with RAB11A and VIPAS39. Associates with adapter protein complex 3 (AP-3), clathrin:AP-3 and clathrin:HGS complexes. Phosphorylated on tyrosine residues.

Its subcellular location is the late endosome membrane. It is found in the lysosome membrane. It localises to the early endosome. The protein localises to the cytoplasmic vesicle. The protein resides in the clathrin-coated vesicle. Its subcellular location is the recycling endosome. Its function is as follows. May play a role in vesicle-mediated protein trafficking to lysosomal compartments and in membrane docking/fusion reactions of late endosomes/lysosomes. Required for proper trafficking and targeting of the collagen-modifying enzyme lysyl hydroxylase 3 (LH3) to intracellular collagen. Mediates phagolysosomal fusion in macrophages. Proposed to be involved in endosomal maturation implicating in part VIPAS39. In epithelial cells, the VPS33B:VIPAS39 complex may play a role in the apical RAB11A-dependentrecycling pathway and in the maintenance of the apical-basolateral polarity. Seems to be involved in the sorting of specific cargos from the trans-Golgi network to alpha-granule-destined multivesicular bodies (MVBs) promoting MVBs maturation in megakaryocytes. This is Vacuolar protein sorting-associated protein 33B (Vps33b) from Mus musculus (Mouse).